The following is a 633-amino-acid chain: Leucine-rich repeat and IQ domain-containing protein 3 (633 aa).

LRR repeat units lie at residues 51–72 (SLRV…QGCK), 73–94 (KLIK…TFWN), and 98–119 (NLKL…CVLS). The 48-residue stretch at 132-179 (CPVSLKKGYRHVLVNSIWPLKALDHHVISDEEIIQNWHLPERFKTFSQ) folds into the LRRCT domain. The region spanning 215-244 (HNSPVLIIQRWIRGFIVRKHLSPYFTRKRH) is the IQ domain. Positions 322–343 (NSKQPRHHIQKGQNEMKSDSED) are disordered. Residues 556–616 (EKREKRKYKQ…AKVEFINTYY (61 aa)) adopt a coiled-coil conformation.

The sequence is that of Leucine-rich repeat and IQ domain-containing protein 3 (Lrriq3) from Rattus norvegicus (Rat).